The primary structure comprises 21 residues: IIGGVESRPHSRPYMATLEIT.

Residues 1 to 21 enclose the Peptidase S1 domain; that stretch reads IIGGVESRPHSRPYMATLEIT. The segment at 1-21 is disordered; sequence IIGGVESRPHSRPYMATLEIT.

It belongs to the peptidase S1 family. Granzyme subfamily.

Its function is as follows. Thrombin inactivating protease. Displays chymotrypsin-like substrate specificity. This Mus musculus (Mouse) protein is Mast cell protease 3 (Mcpt3).